The primary structure comprises 96 residues: MGRSVKKGPFTDTHLEAKLMVLNAASEKKVVRTWSRRSTILPEFVGHTIAVHNGKKFIPVYVTENMVGHKLGEFSPTRTFKGHSVKAATEKSSKPS.

This sequence belongs to the universal ribosomal protein uS19 family.

Its function is as follows. Protein S19 forms a complex with S13 that binds strongly to the 16S ribosomal RNA. This is Small ribosomal subunit protein uS19 from Solibacter usitatus (strain Ellin6076).